A 918-amino-acid polypeptide reads, in one-letter code: Isoleucine--tRNA ligase (918 aa).

A 'HIGH' region motif is present at residues 57–67 (PYANGHIHIGH). Glu-564 serves as a coordination point for L-isoleucyl-5'-AMP. A 'KMSKS' region motif is present at residues 605–609 (KMSKS). Residue Lys-608 coordinates ATP. Cys-888, Cys-891, Cys-903, and Cys-906 together coordinate Zn(2+).

Belongs to the class-I aminoacyl-tRNA synthetase family. IleS type 1 subfamily. In terms of assembly, monomer. Zn(2+) serves as cofactor.

It is found in the cytoplasm. The enzyme catalyses tRNA(Ile) + L-isoleucine + ATP = L-isoleucyl-tRNA(Ile) + AMP + diphosphate. Functionally, catalyzes the attachment of isoleucine to tRNA(Ile). As IleRS can inadvertently accommodate and process structurally similar amino acids such as valine, to avoid such errors it has two additional distinct tRNA(Ile)-dependent editing activities. One activity is designated as 'pretransfer' editing and involves the hydrolysis of activated Val-AMP. The other activity is designated 'posttransfer' editing and involves deacylation of mischarged Val-tRNA(Ile). This Nitratiruptor sp. (strain SB155-2) protein is Isoleucine--tRNA ligase.